The chain runs to 132 residues: Proline-rich protein sgp2 (132 aa).

The signal sequence occupies residues 1–20; the sequence is MKYCFVFFVTLICLIANCSA. Disordered stretches follow at residues 23–62 and 87–132; these read EGDK…SNSR and GASV…LGLP. The segment covering 36-47 has biased composition (basic and acidic residues); that stretch reads KQIERASDKTSE. The segment covering 51–62 has biased composition (polar residues); the sequence is GNTNAQGDSNSR. Residues 91–105 show a composition bias toward low complexity; the sequence is PQLPDLPTTPSLPDM.

The protein localises to the secreted. The polypeptide is Proline-rich protein sgp2 (sgp2) (Glossina morsitans morsitans (Savannah tsetse fly)).